Consider the following 906-residue polypeptide: Glutamate receptor 1 (906 aa).

The first 18 residues, 1 to 18, serve as a signal peptide directing secretion; that stretch reads MQHIFAFFCTGFLGAVVG. At 19 to 536 the chain is on the extracellular side; it reads ANFPNNIQIG…GVFSFLDPLA (518 aa). Residues asparagine 63, asparagine 249, asparagine 257, asparagine 363, asparagine 401, and asparagine 406 are each glycosylated (N-linked (GlcNAc...) asparagine). A disulfide bond links cysteine 75 and cysteine 323. Proline 492, threonine 494, and arginine 499 together coordinate L-glutamate. Residues 537–557 traverse the membrane as a helical segment; it reads YEIWMCIVFAYIGVSVVLFLV. The Cytoplasmic segment spans residues 558 to 584; the sequence is SRFSPYEWHSEEFEEGRDQTTSDQSNE. The helical; Pore-forming intramembrane region spans 585–600; the sequence is FGIFNSLWFSLGAFMQ. An intramembrane segment occupies 601-603; sequence QGC. Residue cysteine 603 is the site of S-palmitoyl cysteine attachment. Residues 604–609 are Cytoplasmic-facing; it reads DISPRS. The helical transmembrane segment at 610-630 threads the bilayer; it reads LSGRIVGGVWWFFTLIIISSY. The Extracellular segment spans residues 631–805; sequence TANLAAFLTV…DKTSALSLSN (175 aa). The residue at position 645 (serine 645) is a Phosphoserine. Serine 668 and threonine 669 together coordinate L-glutamate. A Phosphoserine modification is found at serine 710. Residue glutamate 719 coordinates L-glutamate. Cysteine 732 and cysteine 787 are oxidised to a cystine. Residues 806–826 form a helical membrane-spanning segment; that stretch reads VAGVFYILIGGLGLAMLVALI. Topologically, residues 827–906 are cytoplasmic; sequence EFCYKSRSES…SGMPLGATGL (80 aa). The S-palmitoyl cysteine moiety is linked to residue cysteine 829. 2 positions are modified to phosphoserine: serine 849 and serine 863. The disordered stretch occupies residues 861–880; it reads RNSGAGASSAGSGENGRVVS. Low complexity predominate over residues 863–872; that stretch reads SGAGASSAGS. The PDZ-binding signature appears at 903–906; sequence ATGL.

The protein belongs to the glutamate-gated ion channel (TC 1.A.10.1) family. GRIA1 subfamily. As to quaternary structure, homotetramer or heterotetramer of pore-forming glutamate receptor subunits; heteromeric assembly can be the result of both receptor subtype and flip-flop forms and according the composition, one partner can be dominant with respect to the fast desensitizing current component, whereas the other can determine the steady-state component. Tetramers may be formed by the dimerization of dimers. Found in a complex with GRIA2, GRIA3, GRIA4, CNIH2, CNIH3, CACNG2, CACNG3, CACNG4, CACNG5, CACNG7 and CACNG8. Interacts with HIP1 and RASGRF2. Interacts with SYNDIG1 and GRIA2. Interacts with DLG1 (via C-terminus). Interacts with LRFN1. Interacts with PRKG2. Interacts with CNIH2 and CACNG2. Interacts with CACNG5; this interaction modulates the gating. Interacts (via C-terminus) with PDLIM4 (via LIM domain); this interaction as well as the interaction of PDLIM4 with alpha-actinin is required for their colocalization in early endosomes. Interacts with SNX27 (via PDZ domain); the interaction is required for recycling to the plasma membrane when endocytosed and prevent degradation in lysosomes. Interacts (via PDZ-binding motif) with SHANK3 (via PDZ domain). Interacts with CACNG3; associates GRIA1 with the adapter protein complex 4 (AP-4) to target GRIA1 to the somatodendritic compartment of neurons. Interacts with CACNG2; this interaction mediates traffick to the plasma membrane and modulation of desensitization. Interaction with CNIH2 and CNIH3; this interaction promotes expression at the plasma membrane and extensively modulates their gating properties by slowing deactivation and desensitization kinetics. Found in a complex with GRIA2, GRIA3, GRIA4, DLG4, CACNG8 and CNIH2. Post-translationally, phosphorylated at Ser-645. Phosphorylated at Ser-710 by PKC. Phosphorylated at Ser-849 by PKC, PKA and CAMK2. Phosphorylated at Ser-863 by PKC, PKA and PRKG2. Phosphorylation of Ser-863 is reduced by induction of long-term depression and increased by induction of long-term potentiation. In terms of processing, palmitoylated. Depalmitoylated by CPT1C and upon L-glutamate stimulation. ZDHHC3/GODZ specifically palmitoylates Cys-603, which leads to Golgi retention and decreased cell surface expression. In contrast, Cys-829 palmitoylation does not affect cell surface expression but regulates stimulation-dependent endocytosis.

Its subcellular location is the cell membrane. The protein localises to the endoplasmic reticulum membrane. It localises to the postsynaptic cell membrane. The protein resides in the postsynaptic density membrane. It is found in the cell projection. Its subcellular location is the dendrite. The protein localises to the dendritic spine. It localises to the early endosome membrane. The protein resides in the recycling endosome membrane. It is found in the presynapse. Its subcellular location is the synapse. The catalysed reaction is Ca(2+)(in) = Ca(2+)(out). The enzyme catalyses Na(+)(in) = Na(+)(out). It carries out the reaction Mg(2+)(in) = Mg(2+)(out). It catalyses the reaction Li(+)(in) = Li(+)(out). The catalysed reaction is K(+)(in) = K(+)(out). The enzyme catalyses Sr(2+)(in) = Sr(2+)(out). Ionotropic glutamate receptor that functions as a ligand-gated cation channel, gated by L-glutamate and glutamatergic agonists such as alpha-amino-3-hydroxy-5-methyl-4-isoxazolepropionic acid (AMPA), quisqualic acid, and kainic acid. L-glutamate acts as an excitatory neurotransmitter at many synapses in the central nervous system. Binding of the excitatory neurotransmitter L-glutamate induces a conformation change, leading to the opening of the cation channel, and thereby converts the chemical signal to an electrical impulse upon entry of monovalent and divalent cations such as sodium and calcium. The receptor then desensitizes rapidly and enters in a transient inactive state, characterized by the presence of bound agonist. In the presence of CACNG2 or CACNG4 or CACNG7 or CACNG8, shows resensitization which is characterized by a delayed accumulation of current flux upon continued application of L-glutamate. Calcium (Ca(2+)) permeability depends on subunits composition and, heteromeric channels containing edited GRIA2 subunit are calcium-impermeable. Also permeable to other divalents cations such as strontium(2+) and magnesium(2+) and monovalent cations such as potassium(1+) and lithium(1+). The polypeptide is Glutamate receptor 1 (Macaca fascicularis (Crab-eating macaque)).